The chain runs to 88 residues: Long neurotoxin LNTX-1 (88 aa).

A signal peptide spans 1-21 (MKTLLLTLVVVTIVCLDFGYA). Disulfide bonds link C24–C42, C35–C63, C48–C52, C67–C78, and C79–C84.

Belongs to the three-finger toxin family. Long-chain subfamily. Type II alpha-neurotoxin sub-subfamily. Expressed by the venom gland.

It localises to the secreted. In terms of biological role, binds with high affinity to muscular (alpha-1/CHRNA1) and neuronal (alpha-7/CHRNA7) nicotinic acetylcholine receptor (nAChR) and inhibits acetylcholine from binding to the receptor, thereby impairing neuromuscular and neuronal transmission. This is Long neurotoxin LNTX-1 from Demansia vestigiata (Lesser black whip snake).